The following is an 863-amino-acid chain: MICAL-like protein 1 (863 aa).

The region spanning 2–108 is the Calponin-homology (CH) domain; sequence AGPRGALLAW…YVSQYYNHFC (107 aa). Disordered stretches follow at residues 119–162 and 224–670; these read RKGL…TPSS and GTRS…PLIK. Over residues 125–135 the composition is skewed to pro residues; sequence CSPPSVAPTPV. Low complexity-rich tracts occupy residues 143–159 and 224–244; these read GEELSSGSLSEQGTGQT and GTRSGTRPGPFSQPKQQHQQQ. Residues 162 to 225 form the LIM zinc-binding domain; the sequence is STCAACQQHV…EHCARLGPGT (64 aa). Phosphoserine occurs at positions 295 and 309. Thr318 is modified (phosphothreonine). The span at 325–340 shows a compositional bias: polar residues; the sequence is LQQENLVEQAGSSSLV. Residues 384-395 are compositionally biased toward pro residues; that stretch reads APLPPSSSPGPP. A Phosphoserine modification is found at Ser391. Residues 425–427 carry the NPF1 motif; it reads NPF. A compositionally biased stretch (acidic residues) spans 427 to 438; it reads FEEEEEDKEEEA. Positions 439–450 are enriched in low complexity; it reads PAAPSLATSPAL. 2 positions are modified to phosphothreonine: Thr467 and Thr469. Residues Ser470, Ser471, Ser484, and Ser486 each carry the phosphoserine modification. 3 stretches are compositionally biased toward low complexity: residues 482 to 495, 505 to 520, and 553 to 566; these read APSASPLALHASRL, PSPALSVESLSSESAS, and SLSTNSSLASSGEL. Phosphoserine occurs at positions 578 and 621. The short motif at 633-635 is the NPF2 element; it reads NPF. A compositionally biased stretch (low complexity) spans 638 to 656; that stretch reads KPSPAASPATKKATKGSKP. The interval 652–863 is mediates the interaction with RAB13 and RAB35 and intramolecular interaction with the CH domain; sequence KGSKPVRPPA…AKSKSPRDKS (212 aa). In terms of domain architecture, bMERB spans 671–818; it reads RKVQADQYIP…EEEEDKMLEA (148 aa). The stretch at 682 to 711 forms a coiled coil; that stretch reads EDIHGEMDTIERRLDALEHRGVLLEEKLRG. Residues 700-863 form a necessary and sufficient to associate with tubular recycling endosome membranes, mediate phosphatidic acid-binding and membrane tubulation region; it reads HRGVLLEEKL…AKSKSPRDKS (164 aa). Phosphoserine is present on Ser740. A coiled-coil region spans residues 785 to 830; the sequence is MQELVTLIEQRNAIINCLDEDRQREEEEDKMLEAMIKKKEFQREAE.

As to quaternary structure, homooligomer. Interacts (via NPF1 motif) with EHD1 (via EH domain); the interaction is direct and probably recruits EHD1 to membranes. Interacts with EHD3 (via EH domain). Interacts with RAB35 (GTP-bound form); the interaction is direct and probably recruits MICALL1 to membranes. Interacts with ACAP2; the interaction is indirect through RAB35. Interacts with RAB8A (GTP-bound form); regulates RAB8A association with recycling endosomes. Interacts with RAB13 (GTP-bound form). Interacts with ARF6 (GTP-bound form). Interacts with PACSIN2 (via the SH3 domain). Interacts with DPYSL2.

It is found in the recycling endosome membrane. Its subcellular location is the late endosome membrane. The protein resides in the cell projection. The protein localises to the cilium membrane. It localises to the cytoplasm. It is found in the cytoskeleton. Its subcellular location is the microtubule organizing center. The protein resides in the centrosome. The protein localises to the centriole. In terms of biological role, lipid-binding protein with higher affinity for phosphatidic acid, a lipid enriched in recycling endosome membranes. On endosome membranes, acts as a downstream effector of Rab proteins recruiting cytosolic proteins to regulate membrane tubulation. Involved in a late step of receptor-mediated endocytosis regulating for instance endocytosed-EGF receptor trafficking. Alternatively, regulates slow endocytic recycling of endocytosed proteins back to the plasma membrane. Also involved in cargo protein delivery to the plasma membrane. Plays a role in ciliogenesis coordination, recruits EHD1 to primary cilium where it is anchored to the centriole through interaction with tubulins. May indirectly play a role in neurite outgrowth. In Homo sapiens (Human), this protein is MICAL-like protein 1 (MICALL1).